The following is a 392-amino-acid chain: GPI alpha-1,4-mannosyltransferase I, catalytic subunit (392 aa).

The Cytoplasmic segment spans residues 1 to 4 (MEAR). The helical transmembrane segment at 5-25 (VCVLFGAAALLRLLLLCVGVY) threads the bilayer. At 26–65 (QDQTLKLKYTDVDYHVFTDAARFITQGESPYRRSTFRYTP) the chain is on the lumenal side. The helical transmembrane segment at 66–86 (LLALLLVPNVYLSLLFGKLLF) threads the bilayer. Over 87-125 (GFCDLLSGLLMFRLLVLRGASHGSACVSCGLWLLNPLPM) the chain is Cytoplasmic. A helical transmembrane segment spans residues 126–148 (AVSTRGNAESVLAVLVLSTLLCL). Over 149–156 (QLRKHTTA) the chain is Lumenal. A helical membrane pass occupies residues 157 to 177 (ALLFGLSVHMKIYPVTYALPI). At 178–198 (ALALTAAPARGRGVLLRFFSP) the chain is on the cytoplasmic side. A helical transmembrane segment spans residues 199–219 (ALLRFAAVSAAVFLSLGLIFY). Topologically, residues 220-261 (CRYGWEFLQEAYLYHLTRRDLRHNFSPFFYLQYVCAERCWSS) are lumenal. A helical transmembrane segment spans residues 262-282 (GLLPLLLLPQLLLLLLASAAF). Residues 283–302 (SSDLPFCCFLHTAVFVSFNR) lie on the Cytoplasmic side of the membrane. Residues 303-323 (VCTSQYFLWYLCLLPVVLPRL) traverse the membrane as a helical segment. Residues 324–330 (RLRLGRG) lie on the Lumenal side of the membrane. The helical transmembrane segment at 331–351 (LLLLLLWLLLQGLWLAPAYLL) threads the bilayer. Over 352–360 (EFQGWNSFS) the chain is Cytoplasmic. Residues 361–381 (WIWAASLLFLLTNTFILAQII) form a helical membrane-spanning segment. The Lumenal portion of the chain corresponds to 382–392 (QHYRPHDRKAD).

The protein belongs to the PIGM family. In terms of assembly, part of the glycosylphosphatidylinositol-mannosyltransferase I complex that is composed of PIGM and PIGX.

It is found in the endoplasmic reticulum membrane. The protein operates within glycolipid biosynthesis; glycosylphosphatidylinositol-anchor biosynthesis. Its function is as follows. Catalytic subunit of the glycosylphosphatidylinositol-mannosyltransferase I complex which catalyzes the transfer of the first mannose, via an alpha-1,4 bond from a dolichol-phosphate-mannose (Dol-P-Man) to the glucosaminyl acyl phosphatidylinositol (GlcN-(acyl)PI) intermediate to generate alpha-D-Man-(1-&gt;4)-alpha-D-GlcN-(1-&gt;6)-(1-radyl,2-acyl-sn-glycero-3-phospho)-2-acyl-inositol and participates in the sixth step of the glycosylphosphatidylinositol-anchor biosynthesis. The chain is GPI alpha-1,4-mannosyltransferase I, catalytic subunit from Danio rerio (Zebrafish).